A 1097-amino-acid chain; its full sequence is RecBCD enzyme subunit RecC (1097 aa).

The protein belongs to the RecC family. As to quaternary structure, heterotrimer of RecB, RecC and RecD. All subunits contribute to DNA-binding.

Functionally, a helicase/nuclease that prepares dsDNA breaks (DSB) for recombinational DNA repair. Binds to DSBs and unwinds DNA via a highly rapid and processive ATP-dependent bidirectional helicase activity. Holoenzyme degrades any linearized DNA that is unable to undergo homologous recombination. In the holoenzyme this subunit recognizes the wild-type Chi sequence, and when added to isolated RecB increases its ATP-dependent helicase processivity. Unlike the case in E.coli, suppresses RecA-dependent homologous recombination, is instead required for single-strand annealing pathway repair of DSB. This Mycobacterium tuberculosis (strain CDC 1551 / Oshkosh) protein is RecBCD enzyme subunit RecC.